The chain runs to 657 residues: tRNA 5-methylaminomethyl-2-thiouridine biosynthesis bifunctional protein MnmC (657 aa).

The interval 1–233 (MPRGLILATP…KRDMTVAAFP (233 aa)) is tRNA (mnm(5)s(2)U34)-methyltransferase. Positions 256-657 (LGAGLAGCSV…RALRHGKHAA (402 aa)) are FAD-dependent cmnm(5)s(2)U34 oxidoreductase.

In the N-terminal section; belongs to the methyltransferase superfamily. tRNA (mnm(5)s(2)U34)-methyltransferase family. This sequence in the C-terminal section; belongs to the DAO family. FAD is required as a cofactor.

Its subcellular location is the cytoplasm. The enzyme catalyses 5-aminomethyl-2-thiouridine(34) in tRNA + S-adenosyl-L-methionine = 5-methylaminomethyl-2-thiouridine(34) in tRNA + S-adenosyl-L-homocysteine + H(+). Its function is as follows. Catalyzes the last two steps in the biosynthesis of 5-methylaminomethyl-2-thiouridine (mnm(5)s(2)U) at the wobble position (U34) in tRNA. Catalyzes the FAD-dependent demodification of cmnm(5)s(2)U34 to nm(5)s(2)U34, followed by the transfer of a methyl group from S-adenosyl-L-methionine to nm(5)s(2)U34, to form mnm(5)s(2)U34. This chain is tRNA 5-methylaminomethyl-2-thiouridine biosynthesis bifunctional protein MnmC, found in Ralstonia nicotianae (strain ATCC BAA-1114 / GMI1000) (Ralstonia solanacearum).